Reading from the N-terminus, the 173-residue chain is MTTIVCVRKDGKVAIGGDGQATLGNSVEKGTVRKVRRTYKGKVVTGFAGSTADAFILLELFEKKLELHQGHLVKSAVELAKEWRTERSLRRLEAMMIVADETDFLLISGSGDVIEPEFDVLAIGSGGNYAKSAALALLRTENNLTAVEIVKEALTVAGDIDIYTNHNHIIEEI.

T2 is an active-site residue. 3 residues coordinate Na(+): G158, D161, and T164.

It belongs to the peptidase T1B family. HslV subfamily. In terms of assembly, a double ring-shaped homohexamer of HslV is capped on each side by a ring-shaped HslU homohexamer. The assembly of the HslU/HslV complex is dependent on binding of ATP.

It localises to the cytoplasm. It catalyses the reaction ATP-dependent cleavage of peptide bonds with broad specificity.. Its activity is regulated as follows. Allosterically activated by HslU binding. Its function is as follows. Protease subunit of a proteasome-like degradation complex believed to be a general protein degrading machinery. In Actinobacillus succinogenes (strain ATCC 55618 / DSM 22257 / CCUG 43843 / 130Z), this protein is ATP-dependent protease subunit HslV.